The following is a 106-amino-acid chain: YcgL domain-containing protein HCH_02617 (106 aa).

Residues 6–90 (RLISIFRSSK…VQDDYMMDVV (85 aa)) enclose the YcgL domain.

The protein is YcgL domain-containing protein HCH_02617 of Hahella chejuensis (strain KCTC 2396).